Here is a 158-residue protein sequence, read N- to C-terminus: Troponin C, isoform 1 (158 aa).

Residue Ser-1 is modified to N-acetylserine. EF-hand domains are found at residues 15–50 (EQIVVLRRAFDSFDRDKKGYISPETVSDILRMMGIK), 51–86 (VSSTSFKQIIEEIDEDGSGQIEFSEFLQLAAKFLIE), 91–126 (AMMKELKEAFRLYDKEGNGYITTQTLKEILHELDAR), and 127–158 (LTAEELVGIIEEIDEDGSGTVDFDEFMAMMTG). Ca(2+) is bound by residues Asp-64, Asp-66, Ser-68, Gln-70, and Glu-75. The Ca(2+) site is built by Asp-140, Asp-142, Ser-144, Thr-146, and Glu-151.

It belongs to the troponin C family.

Troponin is the central regulatory protein of striated muscle contraction. Tn consists of three components: Tn-I which is the inhibitor of actomyosin ATPase, Tn-T which contains the binding site for tropomyosin and Tn-C. The binding of calcium to Tn-C abolishes the inhibitory action of Tn on actin filaments. This chain is Troponin C, isoform 1, found in Balanus nubilus (Giant acorn barnacle).